Reading from the N-terminus, the 104-residue chain is Circadian clock oscillator protein KaiB (104 aa).

This sequence belongs to the KaiB family. As to quaternary structure, the KaiABC complex composition changes during the circadian cycle to control KaiC phosphorylation. Complexes KaiC(6), KaiA(2-4):KaiC(6), KaiB(6):KaiC(6) and KaiC(6):KaiB(6):KaiA(12) are among the most important forms, many form cooperatively. Undergoes a major conformational rearrangment; in the free state forms homotetramers as a dimer of dimers. When bound to the CI domain of KaiC switches to a monomeric thioredoxin-fold (KaiB(fs)). KaiB(fs) binds CikA, leading it to dephosphorylate phospho-RpaA.

Key component of the KaiABC oscillator complex, which constitutes the main circadian regulator in cyanobacteria. Complex composition changes during the circadian cycle to control KaiC phosphorylation. KaiA stimulates KaiC autophosphorylation, while KaiB sequesters KaiA, leading to KaiC autodephosphorylation. Phospho-Ser-431 KaiC accumulation triggers binding of KaiB to form the KaiB(6):KaiC(6) complex, leading to changes in output regulators CikA and SasA. KaiB switches to a thioredoxin-like fold (KaiB(fs)) when bound to KaiC. KaiB(6):KaiC(6) formation exposes a site for KaiA binding that sequesters KaiA from KaiC, making the KaiC(6):KaiB(6):KaiA(12) complex that results in KaiC autodephosphorylation. Functionally, a metamorphic protein which reversibly switches between an inactive tetrameric fold and a rare, thioredoxin-like monomeric fold (KaiB(fs)). KaiB(fs) binds phospho-KaiC, KaiA and CikA. KaiA and CikA compete for binding to KaiB(fs), and KaiB(fs) and SasA compete for binding to KaiC, thus the clock oscillator and output signal pathway are tightly coupled. The sequence is that of Circadian clock oscillator protein KaiB from Picosynechococcus sp. (strain ATCC 27264 / PCC 7002 / PR-6) (Agmenellum quadruplicatum).